Reading from the N-terminus, the 278-residue chain is RsbT co-antagonist protein RsbRD (278 aa).

One can recognise an STAS domain in the interval serine 160–lysine 271. Residue threonine 181 is modified to Phosphothreonine.

As to quaternary structure, probably present in the stressosome with RsbRA, RsbRB, RsbRC and RsbS. Post-translationally, phosphorylated by RsbT.

In terms of biological role, one of 4 functionally non-identical RsbR paralogs, it functions in the environmental signaling branch of the general stress response. Negative regulator of sigma-B activity. Non-phosphorylated RsbS binds to RsbT, preventing its association with RsbU. Requires any one of RsbRA, RsbRB, RsbRC or RsbRD to sequester RsbT. When RsbS and the RsbR paralog(s) are phosphorylated, they release RsbT, which can then bind and activate RsbU. In Bacillus subtilis (strain 168), this protein is RsbT co-antagonist protein RsbRD (rsbRD).